Reading from the N-terminus, the 489-residue chain is Anthranilate synthase component 1 1 (489 aa).

Residue 262-264 (PYS) coordinates L-tryptophan. The tract at residues 288-309 (DRIETEPIAGTRPRGETPDADD) is disordered. A chorismate-binding site is contributed by 297–298 (GT). Basic and acidic residues predominate over residues 300–309 (PRGETPDADD). Residue Glu324 coordinates Mg(2+). Residues Tyr412, Arg432, 446 to 448 (GAG), and Gly448 contribute to the chorismate site. Residue Glu461 participates in Mg(2+) binding.

It belongs to the anthranilate synthase component I family. In terms of assembly, tetramer of two components I and two components II. Mg(2+) is required as a cofactor.

It catalyses the reaction chorismate + L-glutamine = anthranilate + pyruvate + L-glutamate + H(+). Its pathway is amino-acid biosynthesis; L-tryptophan biosynthesis; L-tryptophan from chorismate: step 1/5. The chain is Anthranilate synthase component 1 1 (trpE1) from Haloarcula marismortui (strain ATCC 43049 / DSM 3752 / JCM 8966 / VKM B-1809) (Halobacterium marismortui).